The following is a 560-amino-acid chain: Developmental and secondary metabolism regulator veA (560 aa).

The Velvet domain occupies 35–241 (GRRLWYRMRV…AEQGCRVRIR (207 aa)). The Nuclear localization signal motif lies at 49–54 (ERARAC). Disordered regions lie at residues 49–70 (ERARACGSGPKSSADRRPVDPP), 171–197 (KEDKDKDKERDVESQPPLTGLSPATGG), and 250–560 (DGKG…RLRY). Residues 171–183 (KEDKDKDKERDVE) show a composition bias toward basic and acidic residues. Residues 336-355 (AAPPQPFAQPPSVPASPVYP) show a composition bias toward pro residues. The span at 395–405 (PRRESIHHDYR) shows a compositional bias: basic and acidic residues. Residues 411–439 (QLPPLPPPPYYPPTPQQSHMPPPQPPQVL) show a composition bias toward pro residues. Residues 444-453 (IDSNSKSNNR) are compositionally biased toward polar residues. The tract at residues 455–496 (PMPSPTALANSAPRPLASLAPLAPLMQSTSSSAGKGPVHPAT) is PEST. Over residues 461-479 (ALANSAPRPLASLAPLAPL) the composition is skewed to low complexity. Basic and acidic residues-rich tracts occupy residues 508–535 (RAHDESFWSEPEHGRYQNGTRDKGRSED) and 546–560 (RRADGTEADGIRLRY).

It belongs to the velvet family. VeA subfamily. As to quaternary structure, component of the heterotrimeric velvet complex composed of laeA, veA and velB; VeA acting as a bridging protein between laeA and velB.

Its subcellular location is the nucleus. The protein localises to the cytoplasm. Component of the velvet transcription factor complex that controls sexual/asexual developmental ratio in response to light, promoting sexual development in the darkness while stimulating asexual sporulation under illumination. The velvet complex acts as a global regulator for secondary metabolite gene expression. Positively regulates chaetoglobosin A biosynthesis by controlling the expression of core genes of the chaetoglobosin A biosynthetic gene cluster and other relevant regulators in a light-dependent manner. VeA directly regulates transcription factors brlA, laeA, and the chaetoglobosin A cluster-specific transcription regulator cheR. Also directly regulates the expression of one of the chaetoglobosin A cluster cytochrome P450 monooxygenases (cheE or cheG), but only indirectly regulates the expression of the PKS-NRPS hybrid cheA. Moreover, VeA has a significant effect on the asexual spores production, irrespective of light or dark condition. The protein is Developmental and secondary metabolism regulator veA of Chaetomium globosum (strain ATCC 6205 / CBS 148.51 / DSM 1962 / NBRC 6347 / NRRL 1970) (Soil fungus).